We begin with the raw amino-acid sequence, 637 residues long: tRNA uridine 5-carboxymethylaminomethyl modification enzyme MnmG (637 aa).

FAD contacts are provided by residues 15–20 (GAGHAG), Ile-127, and Ser-182. Residue 276–290 (GPRYCPSIEDKIVRF) participates in NAD(+) binding. Gln-373 is an FAD binding site.

Belongs to the MnmG family. Homodimer. Heterotetramer of two MnmE and two MnmG subunits. FAD is required as a cofactor.

The protein localises to the cytoplasm. NAD-binding protein involved in the addition of a carboxymethylaminomethyl (cmnm) group at the wobble position (U34) of certain tRNAs, forming tRNA-cmnm(5)s(2)U34. The protein is tRNA uridine 5-carboxymethylaminomethyl modification enzyme MnmG of Streptococcus pneumoniae (strain ATCC BAA-255 / R6).